The following is a 252-amino-acid chain: Trans-aconitate 2-methyltransferase (252 aa).

Belongs to the methyltransferase superfamily. Tam family.

It is found in the cytoplasm. The enzyme catalyses trans-aconitate + S-adenosyl-L-methionine = (E)-3-(methoxycarbonyl)pent-2-enedioate + S-adenosyl-L-homocysteine. Functionally, catalyzes the S-adenosylmethionine monomethyl esterification of trans-aconitate. The protein is Trans-aconitate 2-methyltransferase of Escherichia coli O1:K1 / APEC.